We begin with the raw amino-acid sequence, 251 residues long: MSNQAENTTHFGFKTVQEDTKADLVAGVFHSVAAKYDIMNDVLSMGVHRIWKRFTVDCSGIRKGQKVLDLAGGTGDLTAKFSRIVGQTGQVTLADINDSMLKVGRSKLRDLGIVGNVSYVQANAEELPFPDNHFDLITIAFGLRNVTDKDKALASMYRVLKPGGRLLVLEFSTPLYEPLSKFYDFYSFNVLPKLGKLIANDSESYQYLAESIRMHPGQEILKEMMNSANFEGCEYFNLSGGIVALHRGYKY.

S-adenosyl-L-methionine-binding positions include threonine 74, aspartate 95, and 123–124 (NA).

This sequence belongs to the class I-like SAM-binding methyltransferase superfamily. MenG/UbiE family.

It carries out the reaction a 2-demethylmenaquinol + S-adenosyl-L-methionine = a menaquinol + S-adenosyl-L-homocysteine + H(+). The enzyme catalyses a 2-methoxy-6-(all-trans-polyprenyl)benzene-1,4-diol + S-adenosyl-L-methionine = a 5-methoxy-2-methyl-3-(all-trans-polyprenyl)benzene-1,4-diol + S-adenosyl-L-homocysteine + H(+). The protein operates within quinol/quinone metabolism; menaquinone biosynthesis; menaquinol from 1,4-dihydroxy-2-naphthoate: step 2/2. Its pathway is cofactor biosynthesis; ubiquinone biosynthesis. Methyltransferase required for the conversion of demethylmenaquinol (DMKH2) to menaquinol (MKH2) and the conversion of 2-polyprenyl-6-methoxy-1,4-benzoquinol (DDMQH2) to 2-polyprenyl-3-methyl-6-methoxy-1,4-benzoquinol (DMQH2). The polypeptide is Ubiquinone/menaquinone biosynthesis C-methyltransferase UbiE (Psychromonas ingrahamii (strain DSM 17664 / CCUG 51855 / 37)).